A 332-amino-acid chain; its full sequence is Ketol-acid reductoisomerase (NADP(+)) 2 (332 aa).

Residues 2–182 enclose the KARI N-terminal Rossmann domain; the sequence is AELFYDADAD…GGTRAGVIRT (181 aa). NADP(+) is bound by residues 25-28, serine 51, serine 53, and 83-86; these read YGSQ and DPIQ. The active site involves histidine 108. Glycine 134 contributes to the NADP(+) binding site. Residues 183–328 form the KARI C-terminal knotted domain; the sequence is TFTEETETDL…KELRKLMSWV (146 aa). Mg(2+) is bound by residues aspartate 191, glutamate 195, glutamate 227, and glutamate 231. Serine 252 lines the substrate pocket.

It belongs to the ketol-acid reductoisomerase family. Mg(2+) serves as cofactor.

It catalyses the reaction (2R)-2,3-dihydroxy-3-methylbutanoate + NADP(+) = (2S)-2-acetolactate + NADPH + H(+). The enzyme catalyses (2R,3R)-2,3-dihydroxy-3-methylpentanoate + NADP(+) = (S)-2-ethyl-2-hydroxy-3-oxobutanoate + NADPH + H(+). Its pathway is amino-acid biosynthesis; L-isoleucine biosynthesis; L-isoleucine from 2-oxobutanoate: step 2/4. It functions in the pathway amino-acid biosynthesis; L-valine biosynthesis; L-valine from pyruvate: step 2/4. Its function is as follows. Involved in the biosynthesis of branched-chain amino acids (BCAA). Catalyzes an alkyl-migration followed by a ketol-acid reduction of (S)-2-acetolactate (S2AL) to yield (R)-2,3-dihydroxy-isovalerate. In the isomerase reaction, S2AL is rearranged via a Mg-dependent methyl migration to produce 3-hydroxy-3-methyl-2-ketobutyrate (HMKB). In the reductase reaction, this 2-ketoacid undergoes a metal-dependent reduction by NADPH to yield (R)-2,3-dihydroxy-isovalerate. This is Ketol-acid reductoisomerase (NADP(+)) 2 from Streptomyces coelicolor (strain ATCC BAA-471 / A3(2) / M145).